The primary structure comprises 290 residues: Nucleotide-binding protein XfasM23_0667 (290 aa).

Residue 13-20 (GLSGSGKS) participates in ATP binding. 65–68 (DIRS) provides a ligand contact to GTP.

It belongs to the RapZ-like family.

In terms of biological role, displays ATPase and GTPase activities. This is Nucleotide-binding protein XfasM23_0667 from Xylella fastidiosa (strain M23).